Consider the following 436-residue polypeptide: 3-ketoacyl-CoA thiolase (436 aa).

C99 serves as the catalytic Acyl-thioester intermediate. Catalysis depends on proton acceptor residues H392 and C422.

The protein belongs to the thiolase-like superfamily. Thiolase family. Heterotetramer of two alpha chains (FadJ) and two beta chains (FadI).

The protein localises to the cytoplasm. The enzyme catalyses an acyl-CoA + acetyl-CoA = a 3-oxoacyl-CoA + CoA. The protein operates within lipid metabolism; fatty acid beta-oxidation. Functionally, catalyzes the final step of fatty acid oxidation in which acetyl-CoA is released and the CoA ester of a fatty acid two carbons shorter is formed. The polypeptide is 3-ketoacyl-CoA thiolase (Escherichia coli O157:H7).